The primary structure comprises 486 residues: Transmembrane protein 39A (486 aa).

N31 carries an N-linked (GlcNAc...) asparagine glycan. 8 helical membrane passes run 72–92 (SLFF…IQYI), 110–130 (TSLN…VMLA), 155–175 (LILA…WTLV), 182–202 (SVLN…LYCF), 285–305 (EVLF…LCFV), 317–337 (CEHL…QLLP), 418–438 (VLNL…YSLL), and 444–464 (NHTL…FKLL).

The protein belongs to the TMEM39 family. Interacts with SACM1L, SEC23A and SEC24A.

It is found in the endoplasmic reticulum membrane. In terms of biological role, regulates autophagy by controlling the spatial distribution and levels of the intracellular phosphatidylinositol 4-phosphate (PtdIns(4)P) pools. Modulates (PtdIns(4)P) levels by regulating the ER-to-Golgi trafficking of the phosphatidylinositide phosphatase SACM1L. This Mus musculus (Mouse) protein is Transmembrane protein 39A (Tmem39a).